The sequence spans 333 residues: Pro-cathepsin H (333 aa).

The first 20 residues, 1–20 (MWAALPLLCAGAWLLSTGAT), serve as a signal peptide directing secretion. A propeptide spans 21 to 95 (AELTVNAIEK…AEIKHKFLWS (75 aa)) (activation peptide). 2 N-linked (GlcNAc...) asparagine glycosylation sites follow: Asn-70 and Asn-99. Intrachain disulfides connect Cys-100-Cys-325, Cys-136-Cys-179, Cys-170-Cys-212, and Cys-270-Cys-320. The propeptide occupies 104–113 (KSNYLRGTGP). Cys-139 is a catalytic residue. Residue Asn-228 is glycosylated (N-linked (GlcNAc...) asparagine). Active-site residues include His-279 and Asn-299.

The protein belongs to the peptidase C1 family. As to quaternary structure, composed of a mini chain and a large chain. The large chain may be split into heavy and light chain. All chains are held together by disulfide bonds. Widely expressed with highest expression found in non-skeletal tissues. Low levels found in skeletal tissue.

It is found in the lysosome. The enzyme catalyses Hydrolysis of proteins, acting as an aminopeptidase (notably, cleaving Arg-|-Xaa bonds) as well as an endopeptidase.. Its function is as follows. Important for the overall degradation of proteins in lysosomes. The protein is Pro-cathepsin H (Ctsh) of Mus musculus (Mouse).